A 440-amino-acid chain; its full sequence is Histidinol dehydrogenase (440 aa).

NAD(+) contacts are provided by Tyr136, Gln197, and Asn220. Residues Ser243, Gln265, and His268 each contribute to the substrate site. Gln265 and His268 together coordinate Zn(2+). Active-site proton acceptor residues include Glu333 and His334. Substrate contacts are provided by His334, Asp367, Glu421, and His426. Asp367 is a Zn(2+) binding site. His426 contacts Zn(2+).

This sequence belongs to the histidinol dehydrogenase family. Zn(2+) is required as a cofactor.

The enzyme catalyses L-histidinol + 2 NAD(+) + H2O = L-histidine + 2 NADH + 3 H(+). It functions in the pathway amino-acid biosynthesis; L-histidine biosynthesis; L-histidine from 5-phospho-alpha-D-ribose 1-diphosphate: step 9/9. In terms of biological role, catalyzes the sequential NAD-dependent oxidations of L-histidinol to L-histidinaldehyde and then to L-histidine. The polypeptide is Histidinol dehydrogenase (Pseudomonas aeruginosa (strain ATCC 15692 / DSM 22644 / CIP 104116 / JCM 14847 / LMG 12228 / 1C / PRS 101 / PAO1)).